A 326-amino-acid chain; its full sequence is DNA-directed RNA polymerase subunit alpha (326 aa).

The alpha N-terminal domain (alpha-NTD) stretch occupies residues 1–231 (MQSNALLKPR…DQLSVFADLE (231 aa)). Positions 245–326 (IDPVLLRPVD…WPPAGLEKLG (82 aa)) are alpha C-terminal domain (alpha-CTD).

Belongs to the RNA polymerase alpha chain family. Homodimer. The RNAP catalytic core consists of 2 alpha, 1 beta, 1 beta' and 1 omega subunit. When a sigma factor is associated with the core the holoenzyme is formed, which can initiate transcription.

It catalyses the reaction RNA(n) + a ribonucleoside 5'-triphosphate = RNA(n+1) + diphosphate. Functionally, DNA-dependent RNA polymerase catalyzes the transcription of DNA into RNA using the four ribonucleoside triphosphates as substrates. The chain is DNA-directed RNA polymerase subunit alpha from Azoarcus sp. (strain BH72).